Reading from the N-terminus, the 498-residue chain is MAKKNYIIGIDAGTTGIRTFCFNDKGKVISSAYQEFKQYYPKPGWVEHDPEEIWVKTQKLITLAIKNGKLNPKDAVAIGITNQRETSVVWDKKTGKPVYNAIVWQCRRTSDICKDLKKQSLDSNFRNKTGLVLDAYFSGTKIQWILDNVKGARDRAERGDLLFGTIDTWLLYKLTGHKEHKTDHTNASRTLLFNIQTKEWDEELCKILRVPMSMLPKAFNSKNLFGFTSNVKSIPDGIPISSLVGDQQGALFGQLCTEPGEAKNTYGTGCFLLFNVGDEFRISNQGLITTLALGPEGKTVYCLEGSVFIGGAVVQFLRDNLEFFKYSKDSEKLVKSIKTKDDIVFVPAFAGLGAPHWDQEARGAIFGLSRDTTPAQITRAALKAIALQSYELANAMEKETGKPLKFLRVDGGATSNAWLMQFQADILGTKVIRPQNVDTTVLGAAYLAGLERGFFKSVAHLRKEETKTTQFTPKMKESERKEEIDKWNLAISRVKTET.

ADP is bound at residue Thr14. ATP-binding residues include Thr14 and Thr15. Thr14 contacts sn-glycerol 3-phosphate. Arg18 provides a ligand contact to ADP. Arg84, Glu85, Tyr136, and Asp246 together coordinate sn-glycerol 3-phosphate. 5 residues coordinate glycerol: Arg84, Glu85, Tyr136, Asp246, and Gln247. Residues Thr268 and Gly311 each coordinate ADP. Residues Thr268, Gly311, Gln315, and Gly412 each coordinate ATP. Gly412 and Asn416 together coordinate ADP.

Belongs to the FGGY kinase family.

It catalyses the reaction glycerol + ATP = sn-glycerol 3-phosphate + ADP + H(+). It functions in the pathway polyol metabolism; glycerol degradation via glycerol kinase pathway; sn-glycerol 3-phosphate from glycerol: step 1/1. Its activity is regulated as follows. Inhibited by fructose 1,6-bisphosphate (FBP). Its function is as follows. Key enzyme in the regulation of glycerol uptake and metabolism. Catalyzes the phosphorylation of glycerol to yield sn-glycerol 3-phosphate. This chain is Glycerol kinase, found in Leptospira biflexa serovar Patoc (strain Patoc 1 / Ames).